A 533-amino-acid chain; its full sequence is Solute carrier family 2, facilitated glucose transporter member 2 (533 aa).

Residues Met1–Leu17 lie on the Cytoplasmic side of the membrane. A helical transmembrane segment spans residues Val18–Ile38. The Extracellular segment spans residues Asn39 to Ser110. N-linked (GlcNAc...) asparagine glycosylation is found at Asn64 and Asn69. A helical membrane pass occupies residues Leu111 to Gly131. At Asp132–Arg136 the chain is on the cytoplasmic side. A helical transmembrane segment spans residues Val137–Ala157. The Extracellular segment spans residues Lys158–His163. Residues Ile164 to Val184 traverse the membrane as a helical segment. Residues Pro185–Ala199 are Cytoplasmic-facing. Residues Leu200–Leu220 traverse the membrane as a helical segment. Gln205 lines the D-glucose pocket. At Asp221 to Leu229 the chain is on the extracellular side. Residues Trp230 to Leu250 form a helical membrane-spanning segment. Residues Cys251 to Ala315 are Cytoplasmic-facing. Residues Val316 to Tyr336 form a helical membrane-spanning segment. Residues Gln326–Gln327 and Asn332 contribute to the D-glucose site. The Extracellular segment spans residues Tyr337–Pro350. Residues Val351–Leu371 form a helical membrane-spanning segment. Asn361 contributes to the D-glucose binding site. Residues Val372–Ser379 are Cytoplasmic-facing. A helical membrane pass occupies residues Leu380 to Val400. Residues Leu401–Met413 are Extracellular-facing. Residues Val414–Ile434 traverse the membrane as a helical segment. 2 residues coordinate D-glucose: Glu424 and Trp432. Residues Val435–Pro445 lie on the Cytoplasmic side of the membrane. The chain crosses the membrane as a helical span at residues Ala446 to Phe466. Residues Gln467–Asp471 are Extracellular-facing. A helical transmembrane segment spans residues Leu472–Ala492. The Cytoplasmic segment spans residues Tyr493 to Ala533.

The protein belongs to the major facilitator superfamily. Sugar transporter (TC 2.A.1.1) family. Glucose transporter subfamily.

It is found in the cell membrane. It catalyses the reaction D-glucose(out) = D-glucose(in). The enzyme catalyses D-fructose(out) = D-fructose(in). It carries out the reaction L-dehydroascorbate(out) = L-dehydroascorbate(in). The catalysed reaction is D-galactose(in) = D-galactose(out). D-glucose and maltose competitively inhibit fructose transport. D-glucose, D-fructose and maltose inhibit deoxyglucose transport. Its function is as follows. Facilitative hexose transporter that mediates the transport of glucose, fructose and galactose. Likely mediates the bidirectional transfer of glucose across the plasma membrane of hepatocytes and is responsible for uptake of glucose by the beta cells. The sequence is that of Solute carrier family 2, facilitated glucose transporter member 2 from Gallus gallus (Chicken).